Reading from the N-terminus, the 414-residue chain is Acyltransferase MYCGRDRAFT_85486 (414 aa).

Polar residues predominate over residues 16–25 (DGTSTVTIRP). The disordered stretch occupies residues 16–47 (DGTSTVTIRPTQKAAPSEEPSQDTAPSKKDSN). His-329 contributes to the substrate binding site. The Proton acceptor role is filled by Glu-367.

The protein belongs to the lysine N-acyltransferase mbtK family.

The protein operates within siderophore biosynthesis. Its function is as follows. Acyltransferase; part of the gene cluster 14 that mediates the biosynthesis of a ferrichrome A-like siderophore which may contribute to organismal virulence. The first step of siderophore biosynthesis is performed by the HMG-CoA synthase (HMGS) MYCGRDRAFT_54740 which catalyzes the generation of HMG-CoA and CoA using acetoacetyl-CoA and acetyl-CoA as substrates. The enoyl-CoA isomerase/hydratase MYCGRDRAFT_76805 then catalyzes the conversion of HMG-CoA to methylglutaconyl-CoA. The acyltransferase MYCGRDRAFT_85486 then fuses methylglutaconyl-CoA with hydroxyornithine to yield methylglutaconyl hydroxyornithine. Methylglutaconyl hydroxyornithine is then available for use by the nonribosomal peptide synthetase NRPS2 to generate the ferrichrome A-like siderophore. This is Acyltransferase MYCGRDRAFT_85486 from Zymoseptoria tritici (strain CBS 115943 / IPO323) (Speckled leaf blotch fungus).